Here is a 195-residue protein sequence, read N- to C-terminus: N-(5'-phosphoribosyl)anthranilate isomerase (195 aa).

The protein belongs to the TrpF family.

It catalyses the reaction N-(5-phospho-beta-D-ribosyl)anthranilate = 1-(2-carboxyphenylamino)-1-deoxy-D-ribulose 5-phosphate. It functions in the pathway amino-acid biosynthesis; L-tryptophan biosynthesis; L-tryptophan from chorismate: step 3/5. This chain is N-(5'-phosphoribosyl)anthranilate isomerase, found in Methanoregula boonei (strain DSM 21154 / JCM 14090 / 6A8).